The following is a 625-amino-acid chain: Probable thymidylate synthase (625 aa).

The disordered stretch occupies residues 224-323; it reads AVKNIDGQDD…PEPPVPFTSS (100 aa). Acidic residues predominate over residues 243–257; sequence EEYDDDDDDDVDDNE. 2 stretches are compositionally biased toward polar residues: residues 258 to 269 and 293 to 312; these read QSNSMIETSANA and SQAP…NVTT. DUMP contacts are provided by residues Arg-350 and 477–478; that span reads RR. Residue Cys-497 is the Nucleophile of the active site. DUMP-binding positions include 524–527, Asn-535, and 565–567; these read RSAD and HIY. (6R)-5,10-methylene-5,6,7,8-tetrahydrofolate is bound at residue Asp-527.

In the N-terminal section; belongs to the HFCD (homo-oligomeric flavin containing Cys decarboxylase) superfamily. The protein in the C-terminal section; belongs to the thymidylate synthase family.

The protein resides in the cytoplasm. The enzyme catalyses dUMP + (6R)-5,10-methylene-5,6,7,8-tetrahydrofolate = 7,8-dihydrofolate + dTMP. Its pathway is pyrimidine metabolism; dTTP biosynthesis. Functionally, required for both nuclear and mitochondrial DNA synthesis. The chain is Probable thymidylate synthase from Schizosaccharomyces pombe (strain 972 / ATCC 24843) (Fission yeast).